The sequence spans 253 residues: uncharacterized protein (253 aa).

An N-terminal signal peptide occupies residues 1-25 (MRKKKFLSKVSFGSLFLLCGTVLSA). A lipid anchor (N-palmitoyl cysteine) is attached at Cys26. Residue Cys26 is the site of S-diacylglycerol cysteine attachment.

This sequence belongs to the MG439/MG440 family.

The protein resides in the cell membrane. This is an uncharacterized protein from Mycoplasma pneumoniae (strain ATCC 29342 / M129 / Subtype 1) (Mycoplasmoides pneumoniae).